The sequence spans 186 residues: Putative manganese efflux pump MntP (186 aa).

6 helical membrane passes run 5 to 25 (VLIG…MDAF), 41 to 61 (VFQI…GGMI), 72 to 92 (ALAG…MIVA), 107 to 127 (FGLF…GLSL), 135 to 155 (ILTI…GLLL), and 166 to 186 (YSEA…LLPI).

It belongs to the MntP (TC 9.B.29) family.

The protein localises to the cell membrane. Probably functions as a manganese efflux pump. The protein is Putative manganese efflux pump MntP of Bacillus licheniformis (strain ATCC 14580 / DSM 13 / JCM 2505 / CCUG 7422 / NBRC 12200 / NCIMB 9375 / NCTC 10341 / NRRL NRS-1264 / Gibson 46).